Reading from the N-terminus, the 513-residue chain is cAMP-regulated M3R protein (513 aa).

This sequence to D.discoideum protein M3L.

The chain is cAMP-regulated M3R protein (prtB) from Dictyostelium discoideum (Social amoeba).